A 589-amino-acid chain; its full sequence is MAESGESGGPPGSQDSAAGAEGAGAPAAAASAEPKIMKVTVKTPKEKEEFAVPENSSVQQFKEEISKRFKSHTDQLVLIFAGKILKDQDTLSQHGIHDGLTVHLVIKTQNRPQDHSAQQTNTAGSNVTTSSTPNSNSTSGSATSNPFGLGGLGGLAGLSSLGLNTTNFSELQSQMQRQLLSNPEMMVQIMENPFVQSMLSNPDLMRQLIMANPQMQQLIQRNPEISHMLNNPDIMRQTLELARNPAMMQEMMRNQDRALSNLESIPGGYNALRRMYTDIQEPMLSAAQEQFGGNPFASLVSNTSSGEGSQPSRTENRDPLPNPWAPQTSQSSSASSGTASTVGGTTGSTASGTSGQSTTAPNLVPGVGASMFNTPGMQSLLQQITENPQLMQNMLSAPYMRSMMQSLSQNPDLAAQMMLNNPLFAGNPQLQEQMRQQLPTFLQQMQNPDTLSAMSNPRAMQALLQIQQGLQTLATEAPGLIPGFTPGLGALGSTGGSSGTNGSNATPSENTSPTAGTTEPGHQQFIQQMLQALAGVNPQLQNPEVRFQQQLEQPSAMGFLNREANLQALIATGGDINAAIERLLGSQPS.

Residues 1 to 11 (MAESGESGGPP) are compositionally biased toward gly residues. Disordered stretches follow at residues 1-35 (MAES…AEPK) and 110-145 (NRPQ…ATSN). A2 carries the post-translational modification N-acetylalanine. Low complexity predominate over residues 12–35 (GSQDSAAGAEGAGAPAAAASAEPK). The 75-residue stretch at 37–111 (MKVTVKTPKE…VHLVIKTQNR (75 aa)) folds into the Ubiquitin-like domain. Over residues 110-124 (NRPQDHSAQQTNTAG) the composition is skewed to polar residues. The segment covering 125 to 145 (SNVTTSSTPNSNSTSGSATSN) has biased composition (low complexity). The interval 178–428 (QLLSNPEMMV…LNNPLFAGNP (251 aa)) is interaction with UBXN4. 2 consecutive STI1 domains span residues 182 to 210 (NPEM…QLIM) and 212 to 251 (NPQM…MQEM). The segment at 295–371 (PFASLVSNTS…NLVPGVGASM (77 aa)) is disordered. Over residues 299 to 313 (LVSNTSSGEGSQPSR) the composition is skewed to polar residues. Residues 327 to 360 (QTSQSSSASSGTASTVGGTTGSTASGTSGQSTTA) are compositionally biased toward low complexity. STI1 domains follow at residues 387 to 434 (NPQL…QEQM) and 438 to 470 (LPTF…QQGL). The interval 488–520 (LGALGSTGGSSGTNGSNATPSENTSPTAGTTEP) is disordered. Residues 489 to 499 (GALGSTGGSSG) are compositionally biased toward gly residues. Residues 509-520 (ENTSPTAGTTEP) show a composition bias toward polar residues. The region spanning 546–586 (RFQQQLEQPSAMGFLNREANLQALIATGGDINAAIERLLGS) is the UBA domain.

As to quaternary structure, monomer and homodimer. Heterodimer with UBQLN2. Binds CD47, NBL1, GABRA1, GABRA2, GABRA3, GABRA6, GABRB1, GABRB2 and GABRB3. Binds UBE3A, BTRC, P4HB and MTOR. Interacts with the proteasome 19S subunit. Interacts (via ubiquitin-like domain) with TREX1; the interaction is direct and may control TREX1 subcellular location. Forms a complex with UBXN4 and VCP. Interacts (via UBA domain) with UBQLN4 (via ubiquitin-like domain). Found in a complex with UBQLN2 and MAP1LC3A/B/C. The monomeric form interacts with PSEN1 and PSEN2. Interacts with ORAI1. Interacts (via UBA domain) with TICAM1. Interacts with EPS15. Interacts (via UBA domain) with UBA52 and (via ubiquitin-like domain) with PSMD3 and PSMD4. Interacts with HERPUD1. Interacts with MAP1LC3A/B/C in the presence of UBQLN4. Interacts (via ubiquitin-like domain) with EPS15 (via UIM domains) and both the ubiquitinated and non-ubiquitinated forms can interact with EPS15. Interacts (via ubiquitin-like domain) with EPS15L1, HGS (via UIM domain) and STAM2 (via UIM domain). Interacts with BCL2L10/BCL-B; in the cytoplasm. In terms of processing, degraded during both macroautophagy and during chaperone-mediated autophagy (CMA). Phosphorylated. Post-translationally, ubiquitinated.

It localises to the nucleus. The protein localises to the cytoplasm. It is found in the endoplasmic reticulum. The protein resides in the cytoplasmic vesicle. Its subcellular location is the autophagosome. It localises to the cell membrane. In terms of biological role, plays an important role in the regulation of different protein degradation mechanisms and pathways including ubiquitin-proteasome system (UPS), autophagy and endoplasmic reticulum-associated protein degradation (ERAD) pathway. Mediates the proteasomal targeting of misfolded or accumulated proteins for degradation by binding (via UBA domain) to their polyubiquitin chains and by interacting (via ubiquitin-like domain) with the subunits of the proteasome. Plays a role in the ERAD pathway via its interaction with ER-localized proteins UBXN4, VCP and HERPUD1 and may form a link between the polyubiquitinated ERAD substrates and the proteasome. Plays a role in unfolded protein response (UPR) by attenuating the induction of UPR-inducible genes, DDTI3/CHOP, HSPA5 and PDIA2 during ER stress. Involved in the regulation of macroautophagy and autophagosome formation; required for maturation of autophagy-related protein LC3 from the cytosolic form LC3-I to the membrane-bound form LC3-II and may assist in the maturation of autophagosomes to autolysosomes by mediating autophagosome-lysosome fusion. Negatively regulates the TICAM1/TRIF-dependent toll-like receptor signaling pathway by decreasing the abundance of TICAM1 via the autophagic pathway. Promotes the ubiquitination and lysosomal degradation of ORAI1, consequently down-regulating the ORAI1-mediated Ca2+ mobilization. Suppresses the maturation and proteasomal degradation of amyloid beta A4 protein (A4) by stimulating the lysine 63 (K63)-linked polyubiquitination. Delays the maturation of A4 by sequestering it in the Golgi apparatus and preventing its transport to the cell surface for subsequent processing. Ubiquitinates BCL2L10 and thereby stabilizes protein abundance. This chain is Ubiquilin-1 (UBQLN1), found in Pongo abelii (Sumatran orangutan).